The primary structure comprises 269 residues: 4-hydroxy-tetrahydrodipicolinate reductase (269 aa).

NAD(+) contacts are provided by residues 11-16 (GASGRM) and Glu37. Arg38 contributes to the NADP(+) binding site. NAD(+) is bound by residues 101-103 (GTT) and 125-128 (AGNM). His158 acts as the Proton donor/acceptor in catalysis. His159 serves as a coordination point for (S)-2,3,4,5-tetrahydrodipicolinate. Lys162 acts as the Proton donor in catalysis. A (S)-2,3,4,5-tetrahydrodipicolinate-binding site is contributed by 168-169 (GT).

Belongs to the DapB family.

Its subcellular location is the cytoplasm. The catalysed reaction is (S)-2,3,4,5-tetrahydrodipicolinate + NAD(+) + H2O = (2S,4S)-4-hydroxy-2,3,4,5-tetrahydrodipicolinate + NADH + H(+). The enzyme catalyses (S)-2,3,4,5-tetrahydrodipicolinate + NADP(+) + H2O = (2S,4S)-4-hydroxy-2,3,4,5-tetrahydrodipicolinate + NADPH + H(+). Its pathway is amino-acid biosynthesis; L-lysine biosynthesis via DAP pathway; (S)-tetrahydrodipicolinate from L-aspartate: step 4/4. Its function is as follows. Catalyzes the conversion of 4-hydroxy-tetrahydrodipicolinate (HTPA) to tetrahydrodipicolinate. The chain is 4-hydroxy-tetrahydrodipicolinate reductase from Ruegeria pomeroyi (strain ATCC 700808 / DSM 15171 / DSS-3) (Silicibacter pomeroyi).